The following is a 108-amino-acid chain: MLTALVYVAAALAEIAGCFSFWAWLRLGKSSLWLIPGTASLLLFAWLLTLIDVSAAGRAYAAYGGVYVTVSLLWLWAMEGVWPDRWDLGGATLCLIGAAIIILAPRPA.

A run of 4 helical transmembrane segments spans residues 5–25, 31–51, 62–82, and 88–108; these read LVYV…WAWL, SLWL…LTLI, AYGG…EGVW, and LGGA…PRPA.

The protein belongs to the UPF0060 family.

It is found in the cell inner membrane. This Methylocella silvestris (strain DSM 15510 / CIP 108128 / LMG 27833 / NCIMB 13906 / BL2) protein is UPF0060 membrane protein Msil_1658.